A 150-amino-acid polypeptide reads, in one-letter code: Cytochrome c-type biogenesis protein CcmE (150 aa).

Topologically, residues 1–9 are cytoplasmic; sequence MRNLKKTRR. Residues 10–30 form a helical; Signal-anchor for type II membrane protein membrane-spanning segment; it reads IQILLVAGGALVLSTALIGYG. Over 31-150 the chain is Periplasmic; it reads MRDGINFFRA…VYRDPAQPEG (120 aa). Residues H123 and Y127 each coordinate heme.

This sequence belongs to the CcmE/CycJ family.

It localises to the cell inner membrane. Its function is as follows. Heme chaperone required for the biogenesis of c-type cytochromes. Transiently binds heme delivered by CcmC and transfers the heme to apo-cytochromes in a process facilitated by CcmF and CcmH. The polypeptide is Cytochrome c-type biogenesis protein CcmE (Rhodobacter capsulatus (strain ATCC BAA-309 / NBRC 16581 / SB1003)).